The chain runs to 95 residues: Cobalt transport protein CbiN (95 aa).

2 helical membrane-spanning segments follow: residues 7-27 (IMLIAVAVIAIAPLVIYSGLG) and 67-87 (LLFALQAAIGALIIGYVFGYY).

Belongs to the CbiN family. In terms of assembly, forms an energy-coupling factor (ECF) transporter complex composed of an ATP-binding protein (A component, CbiO), a transmembrane protein (T component, CbiQ) and 2 possible substrate-capture proteins (S components, CbiM and CbiN) of unknown stoichimetry.

The protein localises to the cell membrane. It participates in cofactor biosynthesis; adenosylcobalamin biosynthesis. Part of the energy-coupling factor (ECF) transporter complex CbiMNOQ involved in cobalt import. This is Cobalt transport protein CbiN from Methanothermobacter marburgensis (strain ATCC BAA-927 / DSM 2133 / JCM 14651 / NBRC 100331 / OCM 82 / Marburg) (Methanobacterium thermoautotrophicum).